The chain runs to 177 residues: Decaprenylphosphoryl-5-phosphoribose phosphatase (177 aa).

A run of 4 helical transmembrane segments spans residues 35–55, 62–82, 124–144, and 150–170; these read HFGE…IALP, LVAG…KRLV, GLPL…LLGV, and VAVG…VGGG.

It belongs to the PA-phosphatase related phosphoesterase family.

It localises to the cell membrane. The catalysed reaction is trans,octa-cis-decaprenylphospho-beta-D-ribofuranose 5-phosphate + H2O = trans,octa-cis-decaprenylphospho-beta-D-ribofuranose + phosphate. It participates in cell wall biogenesis; cell wall polysaccharide biosynthesis. Phosphatase involved in the biosynthesis of decaprenylphosphoryl arabinose (DPA), which serves as the arabinose donor for the biosynthesis of arabinogalactan, the major mycobacterial cell wall polysaccharide. Catalyzes the dephosphorylation of decaprenylphosphoryl-5-phosphoribose (DPPR) to decaprenyl-phosphoribose (DPR). The protein is Decaprenylphosphoryl-5-phosphoribose phosphatase of Mycobacterium tuberculosis (strain CDC 1551 / Oshkosh).